A 375-amino-acid chain; its full sequence is Pulmonary surfactant-associated protein D (375 aa).

Residues 1–20 form the signal peptide; it reads MLLFLLSALVLLTQPLGYLE. 2 positions are modified to S-nitrosocysteine: C35 and C40. Positions 45 to 221 are disordered; sequence SGLPGRDGRD…DKGAKGESGL (177 aa). The Collagen-like domain occupies 46 to 222; the sequence is GLPGRDGRDG…KGAKGESGLP (177 aa). Residues 50–65 are compositionally biased toward basic and acidic residues; that stretch reads RDGRDGREGPRGEKGD. Positions 66 to 86 are enriched in low complexity; it reads PGLPGAAGQAGMPGQAGPVGP. P78 carries the 4-hydroxyproline modification. K87 bears the 5-hydroxylysine mark. A glycan (N-linked (GlcNAc...) asparagine) is linked at N90. P96 carries the post-translational modification 4-hydroxyproline. K99 carries the 5-hydroxylysine modification. Residues 105-114 show a composition bias toward pro residues; it reads SGPPGPPGVP. Low complexity-rich tracts occupy residues 116 to 132 and 138 to 150; these read PAGR…IGPQ and KGEA…VGAP. 4-hydroxyproline is present on residues P171 and P177. A compositionally biased stretch (basic and acidic residues) spans 204–216; that stretch reads KGDKGIPGDKGAK. Positions 223–252 form a coiled coil; the sequence is DVASLRQQVEALQGQVQHLQAAFSQYKKVE. In terms of domain architecture, C-type lectin spans 260–375; it reads VGEKIFKTAG…GEKRLVVCEF (116 aa). 2 disulfides stabilise this stretch: C281-C373 and C351-C365.

The protein belongs to the SFTPD family. Oligomeric complex of 4 set of homotrimers. The N-terminus is blocked. Post-translationally, hydroxylation on proline residues within the sequence motif, GXPG, is most likely to be 4-hydroxy as this fits the requirement for 4-hydroxylation in vertebrates. In terms of processing, S-nitrosylation at Cys-35 and Cys-40 alters the quaternary structure which results in a pro-inflammatory chemoattractive signaling activity with macrophages. As to expression, expressed in lung, brain, pancreas and adipose tissue (mainly mature adipocytes).

The protein localises to the secreted. It is found in the extracellular space. The protein resides in the extracellular matrix. Its subcellular location is the surface film. Contributes to the lung's defense against inhaled microorganisms, organic antigens and toxins. Interacts with compounds such as bacterial lipopolysaccharides, oligosaccharides and fatty acids and modulates leukocyte action in immune response. May participate in the extracellular reorganization or turnover of pulmonary surfactant. Binds strongly maltose residues and to a lesser extent other alpha-glucosyl moieties. The sequence is that of Pulmonary surfactant-associated protein D (SFTPD) from Homo sapiens (Human).